The sequence spans 181 residues: Crossover junction endodeoxyribonuclease RuvC (181 aa).

Active-site residues include D7, E67, and D139. The Mg(2+) site is built by D7, E67, and D139.

It belongs to the RuvC family. Homodimer which binds Holliday junction (HJ) DNA. The HJ becomes 2-fold symmetrical on binding to RuvC with unstacked arms; it has a different conformation from HJ DNA in complex with RuvA. In the full resolvosome a probable DNA-RuvA(4)-RuvB(12)-RuvC(2) complex forms which resolves the HJ. Mg(2+) is required as a cofactor.

The protein localises to the cytoplasm. It catalyses the reaction Endonucleolytic cleavage at a junction such as a reciprocal single-stranded crossover between two homologous DNA duplexes (Holliday junction).. Functionally, the RuvA-RuvB-RuvC complex processes Holliday junction (HJ) DNA during genetic recombination and DNA repair. Endonuclease that resolves HJ intermediates. Cleaves cruciform DNA by making single-stranded nicks across the HJ at symmetrical positions within the homologous arms, yielding a 5'-phosphate and a 3'-hydroxyl group; requires a central core of homology in the junction. The consensus cleavage sequence is 5'-(A/T)TT(C/G)-3'. Cleavage occurs on the 3'-side of the TT dinucleotide at the point of strand exchange. HJ branch migration catalyzed by RuvA-RuvB allows RuvC to scan DNA until it finds its consensus sequence, where it cleaves and resolves the cruciform DNA. The polypeptide is Crossover junction endodeoxyribonuclease RuvC (Cupriavidus pinatubonensis (strain JMP 134 / LMG 1197) (Cupriavidus necator (strain JMP 134))).